The chain runs to 306 residues: MDERLPERAHLVTEQVNPDSARLDRLDSPSLVELFCREDERVVPAVRAAAPAIARAIDLTAAALRGGGRLFYVGAGTSGRLGVLDASECPPTFCTDPEQVQGIIAGGTAALTRSVEGAEDDPEAGAAELAGRALSAADVVVGISAGGTAPYVSGALAYARSLGGVTIFVACVPTNQIPERWDIEIRVPVGPEVLAGSTRLKAGTATKLVLNILSTGAMVRLGKTYGNLMVDVAVSNQKLRDRAVRILTTLTELERTAALALLEASGLRVKVALLMHWSNQDPASCATALEAAGGLLPVALEKLSGR.

An SIS domain is found at 60-223 (TAAALRGGGR…STGAMVRLGK (164 aa)). E88 (proton donor) is an active-site residue. The active site involves E119.

The protein belongs to the GCKR-like family. MurNAc-6-P etherase subfamily. In terms of assembly, homodimer.

It catalyses the reaction N-acetyl-D-muramate 6-phosphate + H2O = N-acetyl-D-glucosamine 6-phosphate + (R)-lactate. Its pathway is amino-sugar metabolism; N-acetylmuramate degradation. In terms of biological role, specifically catalyzes the cleavage of the D-lactyl ether substituent of MurNAc 6-phosphate, producing GlcNAc 6-phosphate and D-lactate. The protein is N-acetylmuramic acid 6-phosphate etherase of Gloeobacter violaceus (strain ATCC 29082 / PCC 7421).